Reading from the N-terminus, the 417-residue chain is Blood group Rh(CE) polypeptide (417 aa).

11 helical membrane-spanning segments follow: residues 12 to 32 (CLPL…YFFT), 44 to 64 (LVAS…GLGF), 77 to 97 (VAFN…LDGF), 125 to 145 (ISAG…MVLV), 172 to 192 (FYVF…KPLP), 203 to 223 (TIPS…WPSV), 238 to 258 (MFNT…GSSL), 265 to 285 (ISMT…GTSC), 287 to 307 (LIPS…ISIG), 331 to 351 (IFSL…VLHT), and 358 to 378 (MIGF…VIAL).

Belongs to the ammonium transporter (TC 2.A.49) family. Rh subfamily. Heterotrimer; a RHCE monomer interacts with a RHAG homodimer. Component of the ankyrin-1 complex in the erythrocyte, composed of ANK1, RHCE, RHAG, SLC4A1, EPB42, GYPA, GYPB and AQP1. Interacts (via the N- and C-terminal) with ANK1 (via ANk 1-5 repeats); mediates the primary membrane attachment site for ANK1. As to expression, restricted to tissues or cell lines expressing erythroid characters. Isoform 4g and isoform RhPI-Alpha are expressed in immature erythroblasts but not in mature erythroblasts.

It is found in the membrane. In terms of biological role, component of the ankyrin-1 complex, a multiprotein complex involved in the stability and shape of the erythrocyte membrane. Mediates the primary membrane attachment site for ANK1 when associated with RHAG. May participate in the ammonium and carbon dioxide transport through the heterotrimer form. This Homo sapiens (Human) protein is Blood group Rh(CE) polypeptide.